Consider the following 583-residue polypeptide: Probable cysteine--tRNA ligase, mitochondrial (583 aa).

A Zn(2+)-binding site is contributed by cysteine 82. Glycine 83 is a binding site for L-cysteine. The 'HIGH' region signature appears at 84–94 (PTVYSSSHIGH). Threonine 123 provides a ligand contact to L-cysteine. The short motif at 128 to 131 (KIIN) is the 'KIIK' region element. Zn(2+)-binding residues include cysteine 271, histidine 296, and glutamate 300. Histidine 296 is a binding site for L-cysteine. The 'KMSKS' region motif lies at 337–341 (KMSKS). Position 340 (lysine 340) interacts with ATP.

This sequence belongs to the class-I aminoacyl-tRNA synthetase family. Zn(2+) is required as a cofactor.

It is found in the mitochondrion. The catalysed reaction is tRNA(Cys) + L-cysteine + ATP = L-cysteinyl-tRNA(Cys) + AMP + diphosphate. Functionally, mitochondrial cysteine-specific aminoacyl-tRNA synthetase that catalyzes the ATP-dependent ligation of cysteine to tRNA(Cys). In addition to its role as an aminoacyl-tRNA synthetase, has also cysteine persulfide synthase activity. Produces reactive persulfide species such as cysteine persulfide (CysSSH) from substrate cysteine and mediate direct incorporation of CysSSH into proteins during translations, resulting in protein persulfides and polysulfides. CysSSHs behave as potent antioxidants and cellular protectants. This chain is Probable cysteine--tRNA ligase, mitochondrial (mcysS), found in Dictyostelium discoideum (Social amoeba).